A 624-amino-acid polypeptide reads, in one-letter code: Alpha-amylase 1 (624 aa).

Residues M1–R28 form the signal peptide. Positions E40–S133 constitute a CBM21 domain. C177 and C185 are oxidised to a cystine. Residue W230 coordinates substrate. N268 lines the Ca(2+) pocket. H269 contributes to the substrate binding site. A disulfide bridge connects residues C297 and C311. N304 carries N-linked (GlcNAc...) asparagine glycosylation. Residues E309 and D322 each coordinate Ca(2+). N344 is a glycosylation site (N-linked (GlcNAc...) asparagine). R351 serves as a coordination point for substrate. Residues D353, H357, and E377 each coordinate Ca(2+). D353 serves as the catalytic Nucleophile. K356–H357 is a substrate binding site. The active-site Proton donor is the E377. G381 is a substrate binding site. Residues C387 and C430 are joined by a disulfide bond. The substrate site is built by D444 and R491. C587 and C622 form a disulfide bridge.

This sequence belongs to the glycosyl hydrolase 13 family. The cofactor is Ca(2+).

The protein resides in the secreted. It carries out the reaction Endohydrolysis of (1-&gt;4)-alpha-D-glucosidic linkages in polysaccharides containing three or more (1-&gt;4)-alpha-linked D-glucose units.. The protein is Alpha-amylase 1 (LKA1) of Lipomyces kononenkoae (Yeast).